A 321-amino-acid chain; its full sequence is Probable cell division protein WhiA (321 aa).

Residues 276–309 (NLKELGELLEPPVGKSGVNHRLRKLEKIAEQLHQ) constitute a DNA-binding region (H-T-H motif).

It belongs to the WhiA family.

Functionally, involved in cell division and chromosome segregation. This Natranaerobius thermophilus (strain ATCC BAA-1301 / DSM 18059 / JW/NM-WN-LF) protein is Probable cell division protein WhiA.